An 86-amino-acid polypeptide reads, in one-letter code: Sec-independent protein translocase protein TatA (86 aa).

Residues 1-21 (MGISIWQLLIILAIVLVLFGA) traverse the membrane as a helical segment.

Belongs to the TatA/E family. As to quaternary structure, the Tat system comprises two distinct complexes: a TatABC complex, containing multiple copies of TatA, TatB and TatC subunits, and a separate TatA complex, containing only TatA subunits. Substrates initially bind to the TatABC complex, which probably triggers association of the separate TatA complex to form the active translocon.

The protein localises to the cell inner membrane. Part of the twin-arginine translocation (Tat) system that transports large folded proteins containing a characteristic twin-arginine motif in their signal peptide across membranes. TatA could form the protein-conducting channel of the Tat system. This Hydrogenovibrio crunogenus (strain DSM 25203 / XCL-2) (Thiomicrospira crunogena) protein is Sec-independent protein translocase protein TatA.